A 245-amino-acid polypeptide reads, in one-letter code: Tegument protein UL51 homolog (245 aa).

The S-palmitoyl cysteine; by host moiety is linked to residue cysteine 10. The disordered stretch occupies residues 225 to 245 (PVKSNLKSKHKPKRKASLVAV). The span at 230–245 (LKSKHKPKRKASLVAV) shows a compositional bias: basic residues.

Belongs to the herpesviridae UL51 family. Oligomerizes. Interacts with ORF55; this interaction mediates ORF55 incorporation to virions. In terms of processing, phosphorylated. Post-translationally, palmitoylation is necessary for Golgi localization.

It localises to the virion tegument. Its subcellular location is the host cytoplasm. The protein localises to the host Golgi apparatus. Functionally, plays several roles during the time course of infection, including egress of virus particles from the perinuclear space and secondary envelopment of cytoplasmic capsids that bud into specific trans-Golgi network (TGN)-derived membranes. The sequence is that of Tegument protein UL51 homolog from Equine herpesvirus 1 (strain Ab4p) (EHV-1).